A 257-amino-acid polypeptide reads, in one-letter code: Asnovolin H dehydrogenase nvfC (257 aa).

The helical transmembrane segment at 7–26 threads the bilayer; the sequence is YVLIITGSASGIGLATATIA. I11 is a binding site for NADP(+). N-linked (GlcNAc...) asparagine glycosylation is found at N57, N92, and N110. NADP(+)-binding residues include R119, Y151, K155, and V184. Residue Y151 is the Proton donor of the active site. Residue K155 is the Lowers pKa of active site Tyr of the active site.

It belongs to the short-chain dehydrogenases/reductases (SDR) family.

It is found in the membrane. It carries out the reaction asnovolin H + A = chermesin D + AH2. Its pathway is secondary metabolite biosynthesis; terpenoid biosynthesis. In terms of biological role, short chain dehydrogenase; part of the gene cluster that mediates the biosynthesis of novofumigatonin, a heavily oxygenated meroterpenoid containing a unique orthoester moiety. The first step of the pathway is the synthesis of 3,5-dimethylorsellinic acid (DMOA) by the polyketide synthase nvfA via condensation of one acetyl-CoA starter unit with 3 malonyl-CoA units and 2 methylations. DMOA is then converted to farnesyl-DMOA by the farnesyltransferase nvfB. Epoxydation by FAD-dependent monooxygenase nvfK, followed by a protonation-initiated cyclization catalyzed by the terpene cyclase nvfL leads to the production of asnavolin H. The short chain dehydrogenase nvfC then as a 3-OH dehydrogenase of asnovolin H to yield chemesin D. There are two branches to synthesize asnovolin A from chemesin D. In one branch, chemesin D undergoes Baeyer-Villiger oxidation by nvfH, methylation by nvfJ, and enoyl reduction by the nvfM D enoylreductase that reduces the double bond between C-5'and C-6', to form respectively asnovolin I, asnovolin K, and asnovolin A. In the other branch, the methylation precedes the Baeyer-Villiger oxidation and the enoyl reduction to yield asnovolin A via the asnovolin J intermediate. Asnovolin A is further converted to fumigatonoid A by the Fe(II)/2-oxoglutarate-dependent dioxygenase nvfI that catalyzes an endoperoxidation reaction. The alpha/beta hydrolase nvfD then acts as an epimerase that converts fumigatonoid A to its C-5' epimer, which then undergoes spontaneous or nvfD-catalyzed lactonization. The following step utilizes the ketoreductase nvfG to produce fumigatonoid B. The dioxygenase nvfE further converts fumigatonoid B into fumigatonoid C. Finally the Fe(II)/2-oxoglutarate-dependent dioxygenase nvfF catalyzes two rounds of oxidation to transform fumigatonoid C into the end product, novofumigatonin A. The chain is Asnovolin H dehydrogenase nvfC from Aspergillus novofumigatus (strain IBT 16806).